An 846-amino-acid chain; its full sequence is Translation initiation factor IF-2 (846 aa).

The tract at residues 199-219 (KREEEEKKSKAKKAGGKGFKK) is disordered. A compositionally biased stretch (basic residues) spans 207 to 219 (SKAKKAGGKGFKK). Positions 345–512 (SRAPVVTIMG…AVLLQSEVLE (168 aa)) constitute a tr-type G domain. The interval 354–361 (GHVDHGKT) is G1. A GTP-binding site is contributed by 354-361 (GHVDHGKT). The interval 379 to 383 (GITQH) is G2. The G3 stretch occupies residues 400–403 (DTPG). Residues 400 to 404 (DTPGH) and 454 to 457 (NKID) contribute to the GTP site. The segment at 454–457 (NKID) is G4. The interval 490–492 (SAK) is G5.

The protein belongs to the TRAFAC class translation factor GTPase superfamily. Classic translation factor GTPase family. IF-2 subfamily.

It is found in the cytoplasm. Its function is as follows. One of the essential components for the initiation of protein synthesis. Protects formylmethionyl-tRNA from spontaneous hydrolysis and promotes its binding to the 30S ribosomal subunits. Also involved in the hydrolysis of GTP during the formation of the 70S ribosomal complex. The polypeptide is Translation initiation factor IF-2 (Francisella tularensis subsp. holarctica (strain LVS)).